The sequence spans 631 residues: Probable glutamate--tRNA ligase, cytoplasmic (631 aa).

139–141 serves as a coordination point for L-glutamate; sequence RFP. The short motif at 144-153 is the 'HIGH' region element; it reads PSGFLHIGHI. ATP is bound at residue His149. L-glutamate-binding positions include Asp173, 311–315, and Arg329; that span reads YDFAC. Residues Glu332 and 367-371 contribute to the ATP site; that span reads VLSKR. The 'KMSKS' region signature appears at 367–371; it reads VLSKR.

Belongs to the class-I aminoacyl-tRNA synthetase family. Glutamate--tRNA ligase type 2 subfamily.

Its subcellular location is the cytoplasm. The enzyme catalyses tRNA(Glu) + L-glutamate + ATP = L-glutamyl-tRNA(Glu) + AMP + diphosphate. The sequence is that of Probable glutamate--tRNA ligase, cytoplasmic from Enterocytozoon bieneusi (strain H348) (Microsporidian parasite).